We begin with the raw amino-acid sequence, 536 residues long: Peptide chain release factor 3 (536 aa).

A tr-type G domain is found at 13–281; sequence SHRRTFAIIS…ALIDWAPAPQ (269 aa). Residues 22 to 29, 90 to 94, and 144 to 147 contribute to the GTP site; these read SHPDAGKT, DTPGH, and NKCD.

This sequence belongs to the TRAFAC class translation factor GTPase superfamily. Classic translation factor GTPase family. PrfC subfamily.

It is found in the cytoplasm. Functionally, increases the formation of ribosomal termination complexes and stimulates activities of RF-1 and RF-2. It binds guanine nucleotides and has strong preference for UGA stop codons. It may interact directly with the ribosome. The stimulation of RF-1 and RF-2 is significantly reduced by GTP and GDP, but not by GMP. The sequence is that of Peptide chain release factor 3 from Chromobacterium violaceum (strain ATCC 12472 / DSM 30191 / JCM 1249 / CCUG 213 / NBRC 12614 / NCIMB 9131 / NCTC 9757 / MK).